Here is an 89-residue protein sequence, read N- to C-terminus: GTP cyclohydrolase 1 feedback regulatory protein (89 aa).

This sequence belongs to the GFRP family. As to quaternary structure, homopentamer. Forms a complex with GCH1 where a GCH1 homodecamer is sandwiched by two GFRP homopentamers.

Its subcellular location is the nucleus. It localises to the nucleus membrane. It is found in the cytoplasm. The protein localises to the cytosol. Mediates tetrahydrobiopterin inhibition of GTP cyclohydrolase 1. The sequence is that of GTP cyclohydrolase 1 feedback regulatory protein (gchfr) from Danio rerio (Zebrafish).